We begin with the raw amino-acid sequence, 75 residues long: UPF0729 protein C18orf32 homolog (75 aa).

The segment at 1–37 is necessary for its localzation to the endoplasmic reticulum and lipid droplets; it reads MVCIPCIVIPVLLWVYKRFLEPVLYPIISPIISRFWR. Over residues 43 to 65 the composition is skewed to polar residues; sequence DTPQQKTSTAECNGAANGSTANG. Positions 43–75 are disordered; that stretch reads DTPQQKTSTAECNGAANGSTANGPKTVADKKAD.

Belongs to the UPF0729 family.

Its subcellular location is the endoplasmic reticulum. The protein resides in the lipid droplet. This chain is UPF0729 protein C18orf32 homolog, found in Danio rerio (Zebrafish).